A 272-amino-acid chain; its full sequence is Orotidine 5'-phosphate decarboxylase (272 aa).

Lys95 acts as the Proton donor in catalysis.

Belongs to the OMP decarboxylase family. Type 2 subfamily.

The catalysed reaction is orotidine 5'-phosphate + H(+) = UMP + CO2. Its pathway is pyrimidine metabolism; UMP biosynthesis via de novo pathway; UMP from orotate: step 2/2. The protein is Orotidine 5'-phosphate decarboxylase of Cupriavidus taiwanensis (strain DSM 17343 / BCRC 17206 / CCUG 44338 / CIP 107171 / LMG 19424 / R1) (Ralstonia taiwanensis (strain LMG 19424)).